The sequence spans 449 residues: MSGLLYALLIIPMIGIFFILSFDSYNFNITSNNSNSGSFSEAGAGKNSGGELLKVLVINNELNFYKKIAFITTIMNLIVSLIIYILFDFSTNQFQFVQDALELSVYNIYLGVDGLSIYFVLLTTIIMPIALISNWNSITHNIKAYLIIILLLETLLLAVFLVLDVLLFYIFFESILPPLFILIGLFGSSNKVRASFYIFLYTFNLKCKRAKYRGSPKALVTKVQHESVELAWLMTQGMVKSLVDIWVIAVLSHPCLRTESKQEGVKEQRVDGSSSSRNLEFVRCTLVAGKPVLGRKIHHCPCGPASSKLMKVQGYYNITTQAATYTHPLSTLDPWFITGFVDAEGCFMIGLTKSELYRSGYQVTAIFKISLRRTRKDYTLLCQIRDYFGIGIITKHGETTLQYMVRSIKDLNVILSHFDAYPLFSQKRSDYILFKQAIVLIKNKEHLTK.

It is found in the mitochondrion. This is an uncharacterized protein from Podospora anserina (strain S / ATCC MYA-4624 / DSM 980 / FGSC 10383) (Pleurage anserina).